Reading from the N-terminus, the 892-residue chain is Transposase for transposon Tn4556 (892 aa).

Basic and acidic residues predominate over residues 1-12 (MGGRAGLDDGRG). The segment at 1-63 (MGGRAGLDDG…GQPARDAEHR (63 aa)) is disordered. A compositionally biased stretch (low complexity) spans 23–34 (VAEGAAGAAAWG).

Belongs to the transposase 7 family.

Its function is as follows. Required for transposition of transposon Tn4556. The protein is Transposase for transposon Tn4556 (tnpA) of Streptomyces fradiae (Streptomyces roseoflavus).